The following is a 782-amino-acid chain: Nezukol synthase KSL3 (782 aa).

Positions 529, 533, 677, and 685 each coordinate Mg(2+). The DDXXD motif signature appears at 529-533 (DDVFD).

This sequence belongs to the terpene synthase family. The cofactor is Mg(2+). Highly expressed in leaves, and, at low levels, in stems, but barely in roots and flowers.

It catalyses the reaction (+)-copalyl diphosphate = miltiradiene + diphosphate. The enzyme catalyses (+)-copalyl diphosphate + H2O = nezukol + diphosphate. It participates in secondary metabolite biosynthesis; terpenoid biosynthesis. In terms of biological role, involved in the biosynthesis of ent-kaurene diterpenoids natural products such as oridonin, miltiradiene, eriocalyxin B and nezukol, known to exhibit antitumor, anti-inflammatory and antibacterial activities. Catalyzes the conversion of (+)-copalyl diphosphate ((+)-CPP) to nezukol and miltiradiene. The reaction mechanism proceeds via the ionization of the diphosphate group of (+)-CPP, followed by formation of an intermediary pimar-15-en-8-yl(+) carbocation and neutralization of the carbocation by water capture at C-8 to yield nezukol. Can interact with ent-copalyl diphosphate (ent-CPP) but seems unable to use it as substrate. The polypeptide is Nezukol synthase KSL3 (Isodon rubescens (Rabdosia rubescens)).